The primary structure comprises 262 residues: Acyl-[acyl-carrier-protein]--UDP-N-acetylglucosamine O-acyltransferase (262 aa).

The protein belongs to the transferase hexapeptide repeat family. LpxA subfamily. As to quaternary structure, homotrimer.

The protein localises to the cytoplasm. The catalysed reaction is a (3R)-hydroxyacyl-[ACP] + UDP-N-acetyl-alpha-D-glucosamine = a UDP-3-O-[(3R)-3-hydroxyacyl]-N-acetyl-alpha-D-glucosamine + holo-[ACP]. Its pathway is glycolipid biosynthesis; lipid IV(A) biosynthesis; lipid IV(A) from (3R)-3-hydroxytetradecanoyl-[acyl-carrier-protein] and UDP-N-acetyl-alpha-D-glucosamine: step 1/6. In terms of biological role, involved in the biosynthesis of lipid A, a phosphorylated glycolipid that anchors the lipopolysaccharide to the outer membrane of the cell. This is Acyl-[acyl-carrier-protein]--UDP-N-acetylglucosamine O-acyltransferase from Psychromonas ingrahamii (strain DSM 17664 / CCUG 51855 / 37).